A 155-amino-acid polypeptide reads, in one-letter code: Ribosomal RNA large subunit methyltransferase H (155 aa).

S-adenosyl-L-methionine contacts are provided by residues leucine 72, glycine 103, and 122–127; that span reads LSPLTL.

This sequence belongs to the RNA methyltransferase RlmH family. Homodimer.

The protein localises to the cytoplasm. It catalyses the reaction pseudouridine(1915) in 23S rRNA + S-adenosyl-L-methionine = N(3)-methylpseudouridine(1915) in 23S rRNA + S-adenosyl-L-homocysteine + H(+). Functionally, specifically methylates the pseudouridine at position 1915 (m3Psi1915) in 23S rRNA. The protein is Ribosomal RNA large subunit methyltransferase H of Histophilus somni (strain 2336) (Haemophilus somnus).